We begin with the raw amino-acid sequence, 286 residues long: NAD kinase (286 aa).

Catalysis depends on Asp68, which acts as the Proton acceptor. NAD(+) is bound by residues 68 to 69, Lys73, 142 to 143, Arg153, Asp172, 183 to 188, and Gln242; these read DG, ND, and TGYSFS.

The protein belongs to the NAD kinase family. A divalent metal cation serves as cofactor.

The protein localises to the cytoplasm. It carries out the reaction NAD(+) + ATP = ADP + NADP(+) + H(+). In terms of biological role, involved in the regulation of the intracellular balance of NAD and NADP, and is a key enzyme in the biosynthesis of NADP. Catalyzes specifically the phosphorylation on 2'-hydroxyl of the adenosine moiety of NAD to yield NADP. This is NAD kinase from Natranaerobius thermophilus (strain ATCC BAA-1301 / DSM 18059 / JW/NM-WN-LF).